Reading from the N-terminus, the 104-residue chain is ATP-dependent Clp protease adapter protein ClpS (104 aa).

It belongs to the ClpS family. In terms of assembly, binds to the N-terminal domain of the chaperone ClpA.

Its function is as follows. Involved in the modulation of the specificity of the ClpAP-mediated ATP-dependent protein degradation. The polypeptide is ATP-dependent Clp protease adapter protein ClpS (Burkholderia ambifaria (strain MC40-6)).